Consider the following 867-residue polypeptide: Protein translocase subunit SecA 1 (867 aa).

Residues Gln-86, 104-108, and Asp-493 each bind ATP; that span reads GEGKT.

It belongs to the SecA family. As to quaternary structure, monomer and homodimer. Part of the essential Sec protein translocation apparatus which comprises SecA, SecYEG and auxiliary proteins SecDF. Other proteins may also be involved.

It is found in the cell membrane. It localises to the cytoplasm. The enzyme catalyses ATP + H2O + cellular proteinSide 1 = ADP + phosphate + cellular proteinSide 2.. Its function is as follows. Part of the Sec protein translocase complex. Interacts with the SecYEG preprotein conducting channel. Has a central role in coupling the hydrolysis of ATP to the transfer of proteins into and across the cell membrane, serving as an ATP-driven molecular motor driving the stepwise translocation of polypeptide chains across the membrane. The protein is Protein translocase subunit SecA 1 of Corynebacterium jeikeium (strain K411).